Consider the following 253-residue polypeptide: Ubiquinone/menaquinone biosynthesis C-methyltransferase UbiE (253 aa).

S-adenosyl-L-methionine contacts are provided by residues T76, D97, and 125 to 126 (NA).

The protein belongs to the class I-like SAM-binding methyltransferase superfamily. MenG/UbiE family.

It catalyses the reaction a 2-demethylmenaquinol + S-adenosyl-L-methionine = a menaquinol + S-adenosyl-L-homocysteine + H(+). The catalysed reaction is a 2-methoxy-6-(all-trans-polyprenyl)benzene-1,4-diol + S-adenosyl-L-methionine = a 5-methoxy-2-methyl-3-(all-trans-polyprenyl)benzene-1,4-diol + S-adenosyl-L-homocysteine + H(+). The protein operates within quinol/quinone metabolism; menaquinone biosynthesis; menaquinol from 1,4-dihydroxy-2-naphthoate: step 2/2. It functions in the pathway cofactor biosynthesis; ubiquinone biosynthesis. Functionally, methyltransferase required for the conversion of demethylmenaquinol (DMKH2) to menaquinol (MKH2) and the conversion of 2-polyprenyl-6-methoxy-1,4-benzoquinol (DDMQH2) to 2-polyprenyl-3-methyl-6-methoxy-1,4-benzoquinol (DMQH2). This Rhodopseudomonas palustris (strain HaA2) protein is Ubiquinone/menaquinone biosynthesis C-methyltransferase UbiE.